A 450-amino-acid polypeptide reads, in one-letter code: UDP-N-acetylmuramoylalanine--D-glutamate ligase (450 aa).

Residue 119–125 coordinates ATP; the sequence is GSNGKTT.

This sequence belongs to the MurCDEF family.

It is found in the cytoplasm. It carries out the reaction UDP-N-acetyl-alpha-D-muramoyl-L-alanine + D-glutamate + ATP = UDP-N-acetyl-alpha-D-muramoyl-L-alanyl-D-glutamate + ADP + phosphate + H(+). It functions in the pathway cell wall biogenesis; peptidoglycan biosynthesis. Cell wall formation. Catalyzes the addition of glutamate to the nucleotide precursor UDP-N-acetylmuramoyl-L-alanine (UMA). This Streptococcus thermophilus (strain ATCC BAA-491 / LMD-9) protein is UDP-N-acetylmuramoylalanine--D-glutamate ligase.